Consider the following 490-residue polypeptide: Betaine aldehyde dehydrogenase (490 aa).

K(+) contacts are provided by Ile-27 and Asp-93. Gly-150–Trp-152 is an NAD(+) binding site. Lys-162 acts as the Charge relay system in catalysis. Residue Lys-176–Glu-179 coordinates NAD(+). Val-180 lines the K(+) pocket. Gly-230–Thr-233 is an NAD(+) binding site. Leu-246 is a binding site for K(+). The Proton acceptor role is filled by Glu-252. The NAD(+) site is built by Gly-254, Cys-286, and Glu-387. The active-site Nucleophile is Cys-286. Cysteine sulfenic acid (-SOH) is present on Cys-286. K(+) contacts are provided by Lys-457 and Gly-460. The active-site Charge relay system is Glu-464.

Belongs to the aldehyde dehydrogenase family. In terms of assembly, dimer of dimers. The cofactor is K(+).

It catalyses the reaction betaine aldehyde + NAD(+) + H2O = glycine betaine + NADH + 2 H(+). Its pathway is amine and polyamine biosynthesis; betaine biosynthesis via choline pathway; betaine from betaine aldehyde: step 1/1. In terms of biological role, involved in the biosynthesis of the osmoprotectant glycine betaine. Catalyzes the irreversible oxidation of betaine aldehyde to the corresponding acid. This Pseudomonas syringae pv. syringae (strain B728a) protein is Betaine aldehyde dehydrogenase.